Consider the following 444-residue polypeptide: Homogentisate 1,2-dioxygenase (444 aa).

The interval glycine 92–proline 111 is disordered. Histidine 298 (proton acceptor) is an active-site residue. Fe cation contacts are provided by histidine 341 and glutamate 347. Residues tyrosine 356 and histidine 377 each coordinate homogentisate. Histidine 377 provides a ligand contact to Fe cation.

It belongs to the homogentisate dioxygenase family. In terms of assembly, hexamer; dimer of trimers. Requires Fe cation as cofactor.

The catalysed reaction is homogentisate + O2 = 4-maleylacetoacetate + H(+). The protein operates within amino-acid degradation; L-phenylalanine degradation; acetoacetate and fumarate from L-phenylalanine: step 4/6. Involved in the catabolism of homogentisate (2,5-dihydroxyphenylacetate or 2,5-OH-PhAc), a central intermediate in the degradation of phenylalanine and tyrosine. Catalyzes the oxidative ring cleavage of the aromatic ring of homogentisate to yield maleylacetoacetate. This chain is Homogentisate 1,2-dioxygenase, found in Burkholderia vietnamiensis (strain G4 / LMG 22486) (Burkholderia cepacia (strain R1808)).